The chain runs to 158 residues: C-type lectin mannose-binding isoform (158 aa).

The first 23 residues, 1–23, serve as a signal peptide directing secretion; that stretch reads MGRFLLVTLSLLVGAFSLNEANS. Cystine bridges form between Cys-26-Cys-37, Cys-54-Cys-154, Cys-61-Cys-156, and Cys-129-Cys-146. A C-type lectin domain is found at 33–155; the sequence is KNGFCYKVFN…CKALYSFICQ (123 aa). Residues 119–121 carry the Mannose-binding motif; sequence EPN. Residue Asn-121 is glycosylated (N-linked (GlcNAc...) asparagine). The Ca(2+) site is built by Glu-127, Asn-142, and Asp-143.

It belongs to the true venom lectin family. As to quaternary structure, dimer. Probably disulfide-linked homodimer. As to expression, expressed by the venom gland.

The protein localises to the secreted. Functionally, mannose-binding lectin that binds to and agglutinates rabbit (but not human) erythrocytes in a calcium-dependent manner. This is C-type lectin mannose-binding isoform from Oxyuranus scutellatus (Coastal taipan).